A 425-amino-acid polypeptide reads, in one-letter code: Tryptophan synthase beta chain (425 aa).

N6-(pyridoxal phosphate)lysine is present on lysine 107.

This sequence belongs to the TrpB family. Tetramer of two alpha and two beta chains. It depends on pyridoxal 5'-phosphate as a cofactor.

The catalysed reaction is (1S,2R)-1-C-(indol-3-yl)glycerol 3-phosphate + L-serine = D-glyceraldehyde 3-phosphate + L-tryptophan + H2O. It functions in the pathway amino-acid biosynthesis; L-tryptophan biosynthesis; L-tryptophan from chorismate: step 5/5. In terms of biological role, the beta subunit is responsible for the synthesis of L-tryptophan from indole and L-serine. The polypeptide is Tryptophan synthase beta chain (Synechococcus sp. (strain JA-2-3B'a(2-13)) (Cyanobacteria bacterium Yellowstone B-Prime)).